We begin with the raw amino-acid sequence, 463 residues long: NADH dehydrogenase [ubiquinone] iron-sulfur protein 2, mitochondrial (463 aa).

The N-terminal 33 residues, Met-1–Gly-33, are a transit peptide targeting the mitochondrion. N6-acetyllysine is present on Lys-62. A Symmetric dimethylarginine modification is found at Arg-118. [4Fe-4S] cluster-binding residues include Cys-326, Cys-332, and Cys-347.

This sequence belongs to the complex I 49 kDa subunit family. As to quaternary structure, core subunit of respiratory chain NADH dehydrogenase (Complex I) which is composed of 45 different subunits. Component of the iron-sulfur (IP) fragment of the enzyme. Interacts with NDUFAF3. Interacts with NDUFAF7. Interacts with CERS2. [4Fe-4S] cluster serves as cofactor. In terms of processing, dimethylation at Arg-118 by NDUFAF7 takes place after NDUFS2 assembles into the complex I, leading to stabilize the early intermediate complex.

It is found in the mitochondrion inner membrane. It catalyses the reaction a ubiquinone + NADH + 5 H(+)(in) = a ubiquinol + NAD(+) + 4 H(+)(out). In terms of biological role, core subunit of the mitochondrial membrane respiratory chain NADH dehydrogenase (Complex I) which catalyzes electron transfer from NADH through the respiratory chain, using ubiquinone as an electron acceptor. Essential for the catalytic activity and assembly of complex I. Redox-sensitive, critical component of the oxygen-sensing pathway in the pulmonary vasculature which plays a key role in acute pulmonary oxygen-sensing and hypoxic pulmonary vasoconstriction. Plays an important role in carotid body sensing of hypoxia. Essential for glia-like neural stem and progenitor cell proliferation, differentiation and subsequent oligodendrocyte or neuronal maturation. The sequence is that of NADH dehydrogenase [ubiquinone] iron-sulfur protein 2, mitochondrial (NDUFS2) from Pan troglodytes (Chimpanzee).